A 438-amino-acid polypeptide reads, in one-letter code: Beta-1,3-galactosyl-O-glycosyl-glycoprotein beta-1,6-N-acetylglucosaminyltransferase 3 (438 aa).

Residues 1-6 are Cytoplasmic-facing; that stretch reads MVQWKR. The helical; Signal-anchor for type II membrane protein transmembrane segment at 7–26 threads the bilayer; that stretch reads LCQLHYLWALGCYMLLATVA. The Lumenal portion of the chain corresponds to 27–438; that stretch reads LKLSFRLKCD…RYKAIYGTEL (412 aa). Disulfide bonds link Cys70-Cys227, Cys161-Cys382, Cys182-Cys209, and Cys391-Cys423. Asn289 carries N-linked (GlcNAc...) asparagine glycosylation.

Belongs to the glycosyltransferase 14 family. In terms of processing, N-glycosylated. Primarily expressed in mucus-secreting tissues. Expressed in colon, kidney, small intestine, trachea, and stomach, where mucin is produced.

It is found in the golgi apparatus membrane. The catalysed reaction is a 3-O-[beta-D-galactosyl-(1-&gt;3)-N-acetyl-alpha-D-galactosaminyl]-L-seryl-[protein] + UDP-N-acetyl-alpha-D-glucosamine = 3-O-{beta-D-galactosyl-(1-&gt;3)-[N-acetyl-beta-D-glucosaminyl-(1-&gt;6)]-N-acetyl-alpha-D-galactosaminyl}-L-seryl-[protein] + UDP + H(+). It carries out the reaction a 3-O-[beta-D-galactosyl-(1-&gt;3)-N-acetyl-alpha-D-galactosaminyl]-L-threonyl-[protein] + UDP-N-acetyl-alpha-D-glucosamine = a 3-O-{beta-D-galactosyl-(1-&gt;3)-[N-acetyl-beta-D-glucosaminyl-(1-&gt;6)]-N-acetyl-alpha-D-galactosaminyl}-L-threonyl-[protein] + UDP + H(+). The enzyme catalyses a beta-D-Gal-(1-&gt;4)-beta-D-GlcNAc-(1-&gt;3)-beta-D-Gal-(1-&gt;4)-beta-D-GlcNAc derivative + UDP-N-acetyl-alpha-D-glucosamine = a beta-D-Gal-(1-&gt;4)-beta-D-GlcNAc-(1-&gt;3)-[beta-D-GlcNAc-(1-&gt;6)]-beta-D-Gal-(1-&gt;4)-N-acetyl-beta-D-glucosaminyl derivative + UDP + H(+). It catalyses the reaction 3-O-[N-acetyl-beta-D-glucosaminyl-(1-&gt;3)-N-acetyl-alpha-D-galactosaminyl]-L-seryl-[protein] + UDP-N-acetyl-alpha-D-glucosamine = 3-O-[N-acetyl-beta-D-glucosaminyl-(1-&gt;3)-[N-acetyl-beta-D-glucosaminyl-(1-&gt;6)]-N-acetyl-alpha-D-galactosaminyl]-L-seryl-[protein] + UDP + H(+). The catalysed reaction is a 3-O-[N-acetyl-beta-D-glucosaminyl-(1-&gt;3)-N-acetyl-alpha-D-galactosaminyl]-L-threonyl-[protein] + UDP-N-acetyl-alpha-D-glucosamine = 3-O-[N-acetyl-beta-D-glucosaminyl-(1-&gt;3)-[N-acetyl-beta-D-glucosaminyl-(1-&gt;6)]-N-acetyl-alpha-D-galactosaminyl]-L-threonyl-[protein] + UDP + H(+). The protein operates within protein modification; protein glycosylation. In terms of biological role, glycosyltransferase that can synthesize all known mucin beta 6 N-acetylglucosaminides. Mediates core 2 and core 4 O-glycan branching, 2 important steps in mucin-type biosynthesis. Also has I-branching enzyme activity by converting linear into branched poly-N-acetyllactosaminoglycans, leading to introduce the blood group I antigen during embryonic development. In Homo sapiens (Human), this protein is Beta-1,3-galactosyl-O-glycosyl-glycoprotein beta-1,6-N-acetylglucosaminyltransferase 3 (GCNT3).